The chain runs to 60 residues: Stress response protein YkoL (60 aa).

The polypeptide is Stress response protein YkoL (ykoL) (Bacillus subtilis (strain 168)).